A 775-amino-acid chain; its full sequence is ATP-dependent 6-phosphofructokinase 2 (775 aa).

The interval 1-390 is N-terminal catalytic PFK domain 1; sequence MTNTILDTYS…YHSAYRHLNT (390 aa). Residues G25, 88–89, and 118–121 contribute to the ATP site; these read RC and GDGS. Residue D119 participates in Mg(2+) binding. Substrate-binding positions include 164–166, R201, 208–210, E264, R292, and 298–301; these read SID, MGR, and HIQR. D166 functions as the Proton acceptor in the catalytic mechanism. Positions 391-404 are interdomain linker; the sequence is SDHPKMVLPEDKRM. Positions 405-775 are C-terminal regulatory PFK domain 2; it reads RVAIIHVGAP…GRSSLYAIPN (371 aa). Residues 537–541, 582–584, D640, and 672–675 contribute to the beta-D-fructose 2,6-bisphosphate site; these read SMSNN, QGA, and HFQQ.

This sequence belongs to the phosphofructokinase type A (PFKA) family. ATP-dependent PFK group I subfamily. Eukaryotic two domain clade 'E' sub-subfamily. Homotetramer. Mg(2+) serves as cofactor.

It localises to the cytoplasm. The enzyme catalyses beta-D-fructose 6-phosphate + ATP = beta-D-fructose 1,6-bisphosphate + ADP + H(+). The protein operates within carbohydrate degradation; glycolysis; D-glyceraldehyde 3-phosphate and glycerone phosphate from D-glucose: step 3/4. With respect to regulation, allosterically activated by ADP, AMP, or fructose 2,6-bisphosphate, and allosterically inhibited by ATP or citrate. Its function is as follows. Catalyzes the phosphorylation of D-fructose 6-phosphate to fructose 1,6-bisphosphate by ATP, the first committing step of glycolysis. This chain is ATP-dependent 6-phosphofructokinase 2 (pfkB), found in Aspergillus oryzae (strain ATCC 42149 / RIB 40) (Yellow koji mold).